A 110-amino-acid polypeptide reads, in one-letter code: UPF0060 membrane protein Pfl01_4105 (110 aa).

Transmembrane regions (helical) follow at residues 5–25 (LWFF…WMWL), 28–48 (GKSA…ALLL), 59–79 (AYAA…AVVE), and 84–104 (LGSD…ILFG).

It belongs to the UPF0060 family.

The protein localises to the cell inner membrane. The sequence is that of UPF0060 membrane protein Pfl01_4105 from Pseudomonas fluorescens (strain Pf0-1).